We begin with the raw amino-acid sequence, 136 residues long: MAALRYRRFLKLCEEWPVDETKRGRDLGAYLRQRVAQAFREGENTQVAEPEACDQMYESLARLHSNYYKHKYPRPRDTSFSGLSVEEYKLILSTDTLEEFQEMNKSVWRKLQEKFAPTRPEEKHRAWTRVLSRPRT.

The N-terminal 13 residues, 1–13, are a transit peptide targeting the mitochondrion; the sequence is MAALRYRRFLKLC.

Interacts with UQCC1.

Its subcellular location is the mitochondrion matrix. It localises to the mitochondrion nucleoid. The protein localises to the mitochondrion. It is found in the mitochondrion intermembrane space. The protein resides in the mitochondrion inner membrane. Required for the assembly of the ubiquinol-cytochrome c reductase complex (mitochondrial respiratory chain complex III or cytochrome b-c1 complex). Plays a role in the modulation of respiratory chain activities such as oxygen consumption and ATP production and via its modulation of the respiratory chain activity can regulate skeletal muscle differentiation and insulin secretion by pancreatic beta-cells. Involved in cytochrome b translation and/or stability. The polypeptide is Ubiquinol-cytochrome-c reductase complex assembly factor 2 (Uqcc2) (Rattus norvegicus (Rat)).